We begin with the raw amino-acid sequence, 787 residues long: Signal transducer and activator of transcription 5B (787 aa).

Phosphotyrosine is present on Tyr90. A phosphoserine mark is found at Ser128 and Ser193. The tract at residues 232-321 is required for interaction with NMI; the sequence is KHQKTLQLLR…MLAEVNATIT (90 aa). In terms of domain architecture, SH2 spans 589–686; sequence WNDGAILGFV…EVYSKYYTPV (98 aa). Tyr682 bears the Phosphotyrosine mark. Tyr699 carries the post-translational modification Phosphotyrosine; by HCK, JAK and PTK6.

It belongs to the transcription factor STAT family. As to quaternary structure, upon activation, forms homodimers. Forms also heterodimers with related family members. Binds NR3C1. Interacts with NCOA1. Interacts with NMI. Interacts with SOCS7. Interacts (via SH2 domain) with INSR. Interacts with CPEB3; this inhibits STAT5B-mediated transcriptional activation. In terms of processing, tyrosine phosphorylated in response to signaling via activated KIT, resulting in translocation to the nucleus. Tyrosine phosphorylated in response to signaling via activated FLT3; wild-type FLT3 results in much weaker phosphorylation than constitutively activated mutant FLT3. Alternatively, can be phosphorylated by JAK2. Phosphorylation at Tyr-699 by PTK6 or HCK leads to an increase of its transcriptional activity.

The protein localises to the cytoplasm. The protein resides in the nucleus. Its function is as follows. Carries out a dual function: signal transduction and activation of transcription. Mediates cellular responses to the cytokine KITLG/SCF and other growth factors. Binds to the GAS element and activates PRL-induced transcription. Positively regulates hematopoietic/erythroid differentiation. The protein is Signal transducer and activator of transcription 5B (STAT5B) of Homo sapiens (Human).